The primary structure comprises 280 residues: Beta-lactamase OXA-58 (280 aa).

Positions 1–18 (MKLLKILSLVCLSISIGA) are cleaved as a signal peptide. A lipid anchor (N-palmitoyl cysteine) is attached at Cys19. Cys19 carries the S-diacylglycerol cysteine lipid modification. Ser83 functions as the Acyl-ester intermediate in the catalytic mechanism. 6 residues coordinate a beta-lactam: Ser83, Lys86, Ser130, Ser221, Trp223, and Arg263. N6-carboxylysine is present on Lys86.

Belongs to the class-D beta-lactamase family. As to quaternary structure, monomer. Dimer. Post-translationally, carboxylated on the epsilon-amino group of a lysine, with the resulting carbamate functional group serving as a general base. Probably N-carboxylated at Lys-86 at neutral pH in vivo and undergoes complete N-decarboxylation, at pH 4.1, in vitro. N-carboxylation at Lys-86 probably increases catalytic activity under physiological conditions.

The protein localises to the cell membrane. The catalysed reaction is a beta-lactam + H2O = a substituted beta-amino acid. With respect to regulation, activated approximately 3-fold by the presence of 0.1M NaHCO3. Functionally, class D beta-lactamase which confers resistance to the beta-lactam antibiotics, including penicillins and oxacillin, and moderate resistance to carbapenems such as imipenem; in the DH10B strain of E.coli. Acts via hydrolysis of the beta-lactam ring. Has benzylpenicillin-, oxacillin-, cephalothin- and imipenem-hydrolyzing activities. This is Beta-lactamase OXA-58 from Acinetobacter baumannii.